Consider the following 550-residue polypeptide: Glucose-6-phosphate isomerase (550 aa).

The Proton donor role is filled by E356. Catalysis depends on residues H387 and K515.

Belongs to the GPI family.

It is found in the cytoplasm. It carries out the reaction alpha-D-glucose 6-phosphate = beta-D-fructose 6-phosphate. It functions in the pathway carbohydrate biosynthesis; gluconeogenesis. The protein operates within carbohydrate degradation; glycolysis; D-glyceraldehyde 3-phosphate and glycerone phosphate from D-glucose: step 2/4. Catalyzes the reversible isomerization of glucose-6-phosphate to fructose-6-phosphate. This chain is Glucose-6-phosphate isomerase, found in Vibrio campbellii (strain ATCC BAA-1116).